Reading from the N-terminus, the 270-residue chain is Replication protein A 32 kDa subunit (270 aa).

At Met-1 the chain carries N-acetylmethionine. Phosphoserine; by PRKDC occurs at positions 4 and 8. The interval 20 to 41 (YTQSPGGFGSPTPSQAEKKSRV) is disordered. Thr-21 bears the Phosphothreonine; by PRKDC mark. At Ser-23 the chain carries Phosphoserine; by CDK2. The residue at position 29 (Ser-29) is a Phosphoserine; by CDK1. The residue at position 33 (Ser-33) is a Phosphoserine; by PRKDC. Residues Lys-37 and Lys-38 each participate in a glycyl lysine isopeptide (Lys-Gly) (interchain with G-Cter in ubiquitin) cross-link. A DNA-binding region (OB) is located at residues 74-148 (VTIVGIIRHA…KSLVAFKIIP (75 aa)). Residues 171 to 192 (KPNSQASAGRPSMSNPGMSEPG) form a disordered region. The interval 187–270 (GMSEPGNFSG…DDHFKSTDAE (84 aa)) is interaction with RAD52, TIPIN, UNG and XPA.

Belongs to the replication factor A protein 2 family. As to quaternary structure, component of the replication protein A complex (RPA/RP-A), a heterotrimeric complex composed of RPA1, RPA2 and RPA3. Interacts with PRPF19; the PRP19-CDC5L complex is recruited to the sites of DNA repair where it ubiquitinates the replication protein A complex (RPA). Interacts with SERTAD3. Interacts with TIPIN. Interacts with TIMELESS. Interacts with PPP4R2; the interaction is direct, DNA damage-dependent and mediates the recruitment of the PP4 catalytic subunit PPP4C. Interacts (hyperphosphorylated) with RAD51. Interacts with SMARCAL1; the interaction is direct and mediates the recruitment to the RPA complex of SMARCAL1. Interacts with RAD52 and XPA; those interactions are direct and associate RAD52 and XPA to the RPA complex. Interacts with FBH1. Interacts with ETAA1; the interaction is direct and promotes ETAA1 recruitment at stalled replication forks. Interacts with DDI2. Interacts (in unphosphorylated form via N-terminus) with EIF4EBP3; the interaction enhances EIF4EBP3-mediated inhibition of EIF4E-mediated mRNA nuclear export. Interacts with nuclear UNG (isoform 2); this interaction mediates UNG recruitment to RPA-coated single-stranded DNA at stalled replication forks. Post-translationally, differentially phosphorylated throughout the cell cycle, becoming phosphorylated at the G1-S transition and dephosphorylated in late mitosis. Mainly phosphorylated at Ser-23 and Ser-29, by cyclin A-CDK2 and cyclin B-CDK1, respectively during DNA replication and mitosis. Dephosphorylation may require the serine/threonine-protein phosphatase 4. Phosphorylation at Ser-23 and Ser-29 is a prerequisite for further phosphorylation. Becomes hyperphosphorylated on additional residues including Ser-4, Ser-8, Thr-21 and Ser-33 in response to DNA damage. Hyperphosphorylation is mediated by ATM, ATR and PRKDC. Primarily recruited to DNA repair nuclear foci as a hypophosphorylated form it undergoes subsequent hyperphosphorylation, catalyzed by ATR. Hyperphosphorylation is required for RAD51 recruitment to chromatin and efficient DNA repair. Phosphorylation at Thr-21 depends upon RFWD3 presence. DNA damage-induced 'Lys-63'-linked polyubiquitination by PRPF19 mediates ATRIP recruitment to the RPA complex at sites of DNA damage and activation of ATR. Ubiquitinated by RFWD3 at stalled replication forks in response to DNA damage: ubiquitination by RFWD3 does not lead to degradation by the proteasome and promotes removal of the RPA complex from stalled replication forks, promoting homologous recombination.

The protein localises to the nucleus. Its subcellular location is the PML body. Its function is as follows. As part of the heterotrimeric replication protein A complex (RPA/RP-A), binds and stabilizes single-stranded DNA intermediates, that form during DNA replication or upon DNA stress. It prevents their reannealing and in parallel, recruits and activates different proteins and complexes involved in DNA metabolism. Thereby, it plays an essential role both in DNA replication and the cellular response to DNA damage. In the cellular response to DNA damage, the RPA complex controls DNA repair and DNA damage checkpoint activation. Through recruitment of ATRIP activates the ATR kinase a master regulator of the DNA damage response. It is required for the recruitment of the DNA double-strand break repair factors RAD51 and RAD52 to chromatin in response to DNA damage. Also recruits to sites of DNA damage proteins like XPA and XPG that are involved in nucleotide excision repair and is required for this mechanism of DNA repair. Also plays a role in base excision repair (BER) probably through interaction with UNG. Also recruits SMARCAL1/HARP, which is involved in replication fork restart, to sites of DNA damage. May also play a role in telomere maintenance. The sequence is that of Replication protein A 32 kDa subunit from Mus musculus (Mouse).